Reading from the N-terminus, the 82-residue chain is Sec-independent protein translocase protein TatA (82 aa).

The chain crosses the membrane as a helical span at residues 1–21 (MGGISIWQLLIIAVIIVLLFG). The interval 48-82 (PAKEAKKDADFVPQNLEKKEAETVEKQKQNDKEQA) is disordered.

The protein belongs to the TatA/E family. The Tat system comprises two distinct complexes: a TatABC complex, containing multiple copies of TatA, TatB and TatC subunits, and a separate TatA complex, containing only TatA subunits. Substrates initially bind to the TatABC complex, which probably triggers association of the separate TatA complex to form the active translocon.

It is found in the cell inner membrane. Functionally, part of the twin-arginine translocation (Tat) system that transports large folded proteins containing a characteristic twin-arginine motif in their signal peptide across membranes. TatA could form the protein-conducting channel of the Tat system. The sequence is that of Sec-independent protein translocase protein TatA from Aliivibrio fischeri (strain ATCC 700601 / ES114) (Vibrio fischeri).